Consider the following 266-residue polypeptide: MNPWQRFARQRLARSRWNRDPAALDPADTPAFEQAWQRQCHMEQTIVARVPEGDIPAALLENIAASLAIWLDEGDFAPPERAAIVRHHARLELAFADIARQAPQPDLSTVQAWYLRHQTQFMRPEQRLTRHLLLTVDNDREAVHQRILGLYRQINASRDAFAPLAQRHSHCPSALEEGRLGWISRGLLYPQLETALFSLAENALSLPIASELGWHLLWCEAIRPAAPMEPQQALESARDYLWQQSQQRHQRQWLEQMISRQPGLCG.

The PpiC domain occupies 124-221; that stretch reads PEQRLTRHLL…LGWHLLWCEA (98 aa).

It belongs to the PpiC/parvulin rotamase family.

It carries out the reaction [protein]-peptidylproline (omega=180) = [protein]-peptidylproline (omega=0). Its function is as follows. Required for the activation and stabilization of the iron-component (NifH) of nitrogenase. Probable PPIase. The protein is Putative peptidyl-prolyl cis-trans isomerase NifM (nifM) of Klebsiella oxytoca.